The sequence spans 369 residues: ERCC4 domain-containing protein EP364R (369 aa).

The ERCC4 domain occupies 3 to 101; that stretch reads FLVADHREHH…QLYFFVEGPA (99 aa). The disordered stretch occupies residues 339–369; sequence PLHDVSDDASSDASSPTGHQTLSKEMSLNTA. A compositionally biased stretch (polar residues) spans 354–369; it reads PTGHQTLSKEMSLNTA.

The protein belongs to the asfivirus EP364R family.

Its function is as follows. Plays a role in the inhibition of type I interferon signaling pathway. Mechanistically, specifically interacts with 2',3'-cGAMP and cleaves it via its phosphodiesterase activity. In turn, prevents 2',3'-cGAMP interaction with host ER-resident STING1 leading to inhibition of downstream signaling pathway and type I interferon production. This African swine fever virus (isolate Tick/South Africa/Pretoriuskop Pr4/1996) (ASFV) protein is ERCC4 domain-containing protein EP364R.